Consider the following 845-residue polypeptide: Putative DEAD-box ATP-dependent RNA helicase 29 (845 aa).

The Q motif motif lies at 28–56; sequence GGFESLNLGPNVFNAIKKKGYKVPTPIQR. The Helicase ATP-binding domain occupies 59-232; that stretch reads MPLILSGVDV…KAGLREPQLV (174 aa). 72 to 79 lines the ATP pocket; it reads ARTGSGKT. The DEAD box motif lies at 180–183; that stretch reads DEAD. One can recognise a Helicase C-terminal domain in the interval 256–411; sequence KYSALLYLVR…EVLKNMEEVM (156 aa). The tract at residues 675–845 is disordered; it reads SGKIKTESGA…GGGGKRGRGR (171 aa). Composition is skewed to basic and acidic residues over residues 696 to 716 and 738 to 754; these read RWQE…DETT and VRSE…ERQQ. Gly residues predominate over residues 770–799; the sequence is GGRGGARGGRGGGARGGRGGSRDFGGGGRD. A compositionally biased stretch (basic and acidic residues) spans 806 to 817; sequence RGGRSGGRDFGG. The segment covering 828–845 has biased composition (basic residues); that stretch reads GGKRGGGRGGGGKRGRGR.

This sequence belongs to the DEAD box helicase family. DDX54/DBP10 subfamily.

It carries out the reaction ATP + H2O = ADP + phosphate + H(+). The sequence is that of Putative DEAD-box ATP-dependent RNA helicase 29 (RH29) from Arabidopsis thaliana (Mouse-ear cress).